Reading from the N-terminus, the 108-residue chain is Small ribosomal subunit protein uS17 (108 aa).

The protein belongs to the universal ribosomal protein uS17 family. As to quaternary structure, part of the 30S ribosomal subunit.

Its function is as follows. One of the primary rRNA binding proteins, it binds specifically to the 5'-end of 16S ribosomal RNA. This chain is Small ribosomal subunit protein uS17, found in Methanocorpusculum labreanum (strain ATCC 43576 / DSM 4855 / Z).